A 227-amino-acid polypeptide reads, in one-letter code: E3 ubiquitin-protein ligase RNF186 (227 aa).

The RING-type zinc-finger motif lies at 40–86 (CLVCREPYSCPRLPKLLACQHAFCAICLKLLLCVQDNTWSITCPLCR). 2 consecutive transmembrane segments (helical) span residues 158–178 (HLLL…PGVL) and 180–200 (WVLT…CCLP).

As to quaternary structure, interacts with BNIP1. Polyubiquitinated. 'Lys-29'-linked autoubiquitination leads to proteasomal degradation.

Its subcellular location is the endoplasmic reticulum membrane. It catalyses the reaction S-ubiquitinyl-[E2 ubiquitin-conjugating enzyme]-L-cysteine + [acceptor protein]-L-lysine = [E2 ubiquitin-conjugating enzyme]-L-cysteine + N(6)-ubiquitinyl-[acceptor protein]-L-lysine.. The protein operates within protein modification; protein ubiquitination. Its function is as follows. E3 ubiquitin protein ligase that is part of an apoptotic signaling pathway activated by endoplasmic reticulum stress. Stimulates the expression of proteins specific of the unfolded protein response (UPR), ubiquitinates BNIP1 and regulates its localization to the mitochondrion and induces calcium release from the endoplasmic reticulum that ultimately leads to cell apoptosis. Plays a role in the maintenance of intestinal homeostasis and clearance of enteric pathogens. Upon NOD2 stimulation, ubiquitinates the ER stress sensor activating transcription factor 6/ATF6 and promotes the unfolded protein response UPR. Participates in basal level of autophagy maintenance by regulating the ubiquitination of EPHB2 and EPHB3. Upon stimulation by ligand EFNB1, ubiquitinates EPHB2 and further recruits MAP1LC3B for autophagy induction. Controls nutrient sensing by ubiquitinating Sestrin-2/SESN2, which is an intracellular sensor of cytosolic leucine and inhibitor of mTORC1 activity. The chain is E3 ubiquitin-protein ligase RNF186 from Homo sapiens (Human).